The primary structure comprises 487 residues: MKVQKSSKKPLKRSASFTNGTKSGSKSMKSSKSSLKSHKKIYKEIFDSEISDNESFDSEISDSESSDNESSDNESSDNESSVESSDEESEYEIKKPRRIPSQYSKKFTDNVLDDESDDDNQSDNESSDINSDDDNNLNELKNNVIEVNKSLSKNIISNGDITDIRNIIYEKIDKEISKGIYGTFNVLIMIHNGYINVTKVIQYVTTKKKKFNDWKSTKQAQELIEEVSSVTGIPVAGLFIAKNTGSKKITEIRGTYAHPDLVPHIVSWASAKFGHKVSKIVNDYMSKKMFDKHEQLIKGKDDKIAELTRKIDKQTSLMKDQKSTIKEQDKKINELLSKSNEVLGYAKDTNRKITHVVKERVPYSDEPKIEHQLIIMKNNDEPIKPKKGEKAKKIYGYTALRIMNKSKSATMNRYYKDHPDGETVLTIDYTPNAMHLWNQCKMELIEDEKIRPGGTSCSSFNLRKEYSERKLKKDIKRIHNLRLKHPE.

Residues 1–12 show a composition bias toward basic residues; the sequence is MKVQKSSKKPLK. A disordered region spans residues 1-137; the sequence is MKVQKSSKKP…DINSDDDNNL (137 aa). Low complexity predominate over residues 22–34; that stretch reads KSGSKSMKSSKSS. Composition is skewed to acidic residues over residues 47-77 and 111-136; these read DSEISDNESFDSEISDSESSDNESSDNESSD and VLDDESDDDNQSDNESSDINSDDDNN. Residues 175-284 enclose the KilA-N domain; that stretch reads EISKGIYGTF…HKVSKIVNDY (110 aa). The stretch at 290–338 forms a coiled coil; that stretch reads FDKHEQLIKGKDDKIAELTRKIDKQTSLMKDQKSTIKEQDKKINELLSK.

This is Putative KilA-N domain-containing protein L37 from Acanthamoeba polyphaga mimivirus (APMV).